Reading from the N-terminus, the 330-residue chain is G-protein coupled receptor 3 (330 aa).

Residues 1–42 (MMWGAGSSMAWFSAGSGSVNVSSVDPVEEPTGPATLLPSPRA) lie on the Extracellular side of the membrane. Residue Asn20 is glycosylated (N-linked (GlcNAc...) asparagine). The chain crosses the membrane as a helical span at residues 43-62 (WDVVLCISGTLVSCENALVV). At 63 to 74 (AIIVGTPAFRAP) the chain is on the cytoplasmic side. Residues 75 to 98 (MFLLVGSLAVADLLAGLGLVLHFA) traverse the membrane as a helical segment. Residues 99–110 (ADFCIGSPEMSL) lie on the Extracellular side of the membrane. Residues 111-132 (MLVGVLAMAFTASIGSLLAITV) traverse the membrane as a helical segment. The Cytoplasmic segment spans residues 133–153 (DRYLSLYNALTYYSETTVTRT). Residues 154 to 173 (YVMLALVWVGALGLGLVPVL) traverse the membrane as a helical segment. Topologically, residues 174-198 (AWNCRDGLTTCGVVYPLSKNHLVVL) are extracellular. A helical transmembrane segment spans residues 199–217 (AIAFFMVFGIMLQLYAQIC). At 218 to 245 (RIVCRHAQQIALQRHLLPASHYVATRKG) the chain is on the cytoplasmic side. The helical transmembrane segment at 246–272 (IATLAVVLGAFAACWLPFTVYCLLGDA) threads the bilayer. The Extracellular segment spans residues 273 to 277 (DSPRL). A helical transmembrane segment spans residues 278-299 (YTYLTLLPATYNSMINPVIYAF). Over 300-330 (RNQDVQKVLWAICCCCSTSKIPFRSRSPSDV) the chain is Cytoplasmic. A lipid anchor (S-palmitoyl cysteine) is attached at Cys313. 3 positions are modified to phosphoserine: Ser324, Ser326, and Ser328.

Belongs to the G-protein coupled receptor 1 family. In terms of tissue distribution, expressed in both the forebrain and hindbrain, with the highest level in habenula. Lower level expression in the testis. Expressed in several metabolically active peripheral tissues, although at lower levels than in the central nervous system (CNS).

It localises to the cell membrane. In terms of biological role, constitutively active G-protein coupled receptor that maintains high 3'-5'-cyclic adenosine monophosphate (cAMP) levels that a plays a role in serveral processes including meiotic arrest in oocytes or neuronal development via activation of numerous intracellular signaling pathways. Acts as an essential activator of thermogenic adipocytes and drives thermogenesis via its intrinsic G(s)-coupling activity without the requirement of a ligand. Has a potential role in modulating a number of brain functions, including behavioral responses to stress, amyloid-beta peptide generation in neurons. Stimulates neurite outgrowth in cerebellar granular neurons modulated via PKA, ERK, and most strongly PI3K-mediated signaling pathways. The protein is G-protein coupled receptor 3 (Gpr3) of Mus musculus (Mouse).